A 154-amino-acid chain; its full sequence is Urease accessory protein UreE (154 aa).

The tract at residues 135–154 is disordered; sequence PENGAYHGTGGHHHHHHDHE. Residues 144 to 154 show a composition bias toward basic residues; the sequence is GGHHHHHHDHE.

It belongs to the UreE family.

The protein resides in the cytoplasm. In terms of biological role, involved in urease metallocenter assembly. Binds nickel. Probably functions as a nickel donor during metallocenter assembly. The protein is Urease accessory protein UreE of Teredinibacter turnerae (strain ATCC 39867 / T7901).